Reading from the N-terminus, the 199-residue chain is N-(5'-phosphoribosyl)anthranilate isomerase (199 aa).

The protein belongs to the TrpF family.

It carries out the reaction N-(5-phospho-beta-D-ribosyl)anthranilate = 1-(2-carboxyphenylamino)-1-deoxy-D-ribulose 5-phosphate. It functions in the pathway amino-acid biosynthesis; L-tryptophan biosynthesis; L-tryptophan from chorismate: step 3/5. The chain is N-(5'-phosphoribosyl)anthranilate isomerase from Lacticaseibacillus casei (strain BL23) (Lactobacillus casei).